The primary structure comprises 490 residues: V-type proton ATPase subunit B (490 aa).

Residue Arg380 participates in ATP binding.

The protein belongs to the ATPase alpha/beta chains family. As to quaternary structure, V-ATPase is a heteromultimeric enzyme made up of two complexes: the ATP-hydrolytic V1 complex and the proton translocation V0 complex. The V1 complex consists of three catalytic AB heterodimers that form a heterohexamer, three peripheral stalks each consisting of EG heterodimers, one central rotor including subunits D and F, and the regulatory subunits C and H. The proton translocation complex V0 consists of the proton transport subunit a, a ring of proteolipid subunits c9c'', rotary subunit d, subunits e and f, and the accessory subunits VhaAC45 and ATP6AP2. As to expression, expressed in Malpighian tubules, rectum, antennal palps and oviduct.

Its function is as follows. Non-catalytic subunit of the V1 complex of vacuolar(H+)-ATPase (V-ATPase), a multisubunit enzyme composed of a peripheral complex (V1) that hydrolyzes ATP and a membrane integral complex (V0) that translocates protons. V-ATPase is responsible for acidifying and maintaining the pH of intracellular compartments and in some cell types, is targeted to the plasma membrane, where it is responsible for acidifying the extracellular environment. Essential for the proper assembly and activity of V-ATPase. The protein is V-type proton ATPase subunit B (Vha55) of Drosophila melanogaster (Fruit fly).